We begin with the raw amino-acid sequence, 256 residues long: MSRESAGAAIRALRESRDWSLADLAAATGVSTMGLSYLERGARKPHKSTVQKVENGLGLPPGTYSRLLVAADPDAELARLIAAQPSNPTAVRRAGAVVVDRHSDTDVLEGYAEAQLDAIKSVIDRLPATTSNEYETYILSVIAQCVKAEMLAASSWRVAVNAGADSTGRLMEHLRALEATRGALLERMPTSLSARFDRACAQSSLPEAVVAALIGVGADEMWDIRNRGVIPAGALPRVRAFVDAIEASHDADEGQQ.

Positions 10 to 64 (IRALRESRDWSLADLAAATGVSTMGLSYLERGARKPHKSTVQKVENGLGLPPGTY) constitute an HTH cro/C1-type domain. The segment at residues 21-40 (LADLAAATGVSTMGLSYLER) is a DNA-binding region (H-T-H motif).

This is an uncharacterized protein from Mycobacterium bovis (strain ATCC BAA-935 / AF2122/97).